Reading from the N-terminus, the 338-residue chain is MENLDALVSQALEAVRHTEDVNALEQIRVHYLGKKGELTQVMKTLGDLPAEERPKVGALINVAKEKVQDALNARKTELEGAALAARLAAERIDVTLPGRGQLSGGLHPVTRTLERIEQCFSRIGYEVAEGPEVEDDYHNFEALNIPGHHPARAMHDTFYFNANMLLRTHTSPVQVRTMESQQPPIRIVCPGRVYRCDSDLTHSPMFHQVEGLLVDEGVSFADLKGTIEEFLRAFFEKQLEVRFRPSFFPFTEPSAEVDIQCVICSGNGCRVCKQTGWLEVMGCGMVHPNVLRMSNIDPEKFQGFAFGMGAERLAMLRYGVNDLRLFFDNDLRFLGQFR.

Residue Glu-252 participates in Mg(2+) binding.

It belongs to the class-II aminoacyl-tRNA synthetase family. Phe-tRNA synthetase alpha subunit type 1 subfamily. As to quaternary structure, tetramer of two alpha and two beta subunits. Requires Mg(2+) as cofactor.

It is found in the cytoplasm. The enzyme catalyses tRNA(Phe) + L-phenylalanine + ATP = L-phenylalanyl-tRNA(Phe) + AMP + diphosphate + H(+). This is Phenylalanine--tRNA ligase alpha subunit from Pseudomonas aeruginosa (strain UCBPP-PA14).